A 312-amino-acid polypeptide reads, in one-letter code: Acetyl-coenzyme A carboxylase carboxyl transferase subunit alpha (312 aa).

The CoA carboxyltransferase C-terminal domain maps to 36–286 (RLEKEVKSIY…KEYFLDALRT (251 aa)).

Belongs to the AccA family. As to quaternary structure, acetyl-CoA carboxylase is a heterohexamer composed of biotin carboxyl carrier protein (AccB), biotin carboxylase (AccC) and two subunits each of ACCase subunit alpha (AccA) and ACCase subunit beta (AccD).

Its subcellular location is the cytoplasm. The enzyme catalyses N(6)-carboxybiotinyl-L-lysyl-[protein] + acetyl-CoA = N(6)-biotinyl-L-lysyl-[protein] + malonyl-CoA. It functions in the pathway lipid metabolism; malonyl-CoA biosynthesis; malonyl-CoA from acetyl-CoA: step 1/1. Functionally, component of the acetyl coenzyme A carboxylase (ACC) complex. First, biotin carboxylase catalyzes the carboxylation of biotin on its carrier protein (BCCP) and then the CO(2) group is transferred by the carboxyltransferase to acetyl-CoA to form malonyl-CoA. The chain is Acetyl-coenzyme A carboxylase carboxyl transferase subunit alpha from Helicobacter pylori (strain P12).